Consider the following 1661-residue polypeptide: Cortactin-binding protein 2 (1661 aa).

5 disordered regions span residues 1–27, 206–226, 329–438, 454–477, and 493–612; these read MATD…AEAT, EKKR…RSTE, TVPV…SLHP, NAND…SPTS, and QALS…LPPK. Residues 124–280 are a coiled coil; that stretch reads KMQERMSTQL…EQLKRGNDSK (157 aa). Residues 383–394 are compositionally biased toward low complexity; that stretch reads GPSTGSTPDLPS. A compositionally biased stretch (polar residues) spans 412-426; it reads SIASQNYSQASSLHS. The segment covering 454–466 has biased composition (low complexity); that stretch reads NANDQDQNGNTTQ. Over residues 467 to 477 the composition is skewed to polar residues; sequence SPPSRDVSPTS. At Arg-497 the chain carries Asymmetric dimethylarginine. 5 ANK repeats span residues 707–737, 741–770, 774–803, 807–836, and 840–869; these read GRPT…DINY, DGHS…QVNA, NGFT…NINH, GGQT…DRSV, and DGWT…PACG. A disordered region spans residues 876-896; the sequence is EPESDVFDLDGGGERPEGTVK. The stretch at 910–940 is one ANK 6 repeat; the sequence is EGWTAAHIAASKGFKNCLEILCQHGGLEPER. A disordered region spans residues 1444–1480; it reads GKKKGENGAWRKVSTSPRKKSGRFPSPTWSKPDLSDE. A Phosphoserine modification is found at Ser-1522. Disordered stretches follow at residues 1555 to 1597 and 1614 to 1661; these read RRFD…SNSK and PRSK…KPNK. A compositionally biased stretch (polar residues) spans 1580 to 1597; sequence KEVSPLSSHQTTECSNSK. The span at 1622-1636 shows a compositional bias: low complexity; sequence SQNTRRSSSSSNTRQ. Residues 1643-1661 show a composition bias toward basic and acidic residues; that stretch reads SKDEIWNLRKNEQVEKPNK.

In terms of assembly, interacts with CTTN/cortactin SH3 domain. Interacts with STRN, STRN4/zinedin and MOB4/phocein; this interactions mediate the association with the STRIPAK core complex and may regulate dendritic spine distribution of the STRIPAK complex in hippocampal neurons. Activation of glutamate receptors weakens the interaction with STRN and STRN4.

The protein resides in the cytoplasm. The protein localises to the cell cortex. It localises to the cell projection. It is found in the dendritic spine. In terms of biological role, regulates the dendritic spine distribution of CTTN/cortactin in hippocampal neurons, and thus controls dendritic spinogenesis and dendritic spine maintenance. Associates with the striatin-interacting phosphatase and kinase (STRIPAK) core complex to regulate dendritic spine distribution of the STRIPAK complex in hippocampal neurons. This chain is Cortactin-binding protein 2 (CTTNBP2), found in Loxodonta africana (African elephant).